Here is a 35-residue protein sequence, read N- to C-terminus: Cupiennin-2b (35 aa).

Residue glutamine 35 is modified to Glutamine amide.

In terms of tissue distribution, expressed by the venom gland.

It is found in the secreted. In Cupiennius salei (American wandering spider), this protein is Cupiennin-2b.